The following is a 672-amino-acid chain: MSKLARLEREEIMECQVMWEPDSKKDTQMDRFRAAVGTACGLALGNYNDLYHWSVRSYMDFWAEFWKFSGIVYSRMYDEVVDTSKGIADVPEWFRGSRLNYAENLLRHKENDRVALYVAREGREEIVKVTFEELRQQVALFAAAMRKMGVKKGDRVVGYLPNSAHAVEAMLAAASIGAIWSSTSPDFGVNGVLDRFSQIQPKLIFSVEAVVYNGKEHGHLEKLQRVVKGLPDLQRVVLIPYVLPREKIDISKIPNSVFLDDFLASGTGAQAPQLEFEQLPFSHPLFIMFSSGTTGAPKCMVHSAGGTLIQHLKEHMLHGNMTSSDILLYYTTVGWMMWNWMVSALATGASLVLYDGSPLVPTPNVLWDLVDRIGITILGTGAKWLSVLEEKDMKPVETHNLHTLHTILSTGSPLKAQSYEYVYRCIKSSVLLGSISGGTDIISCFMGQNSSIPVYKGEIQARNLGMAVEAWDEEGKAVWGASGELVCTKPIPCQPTHFWNDENGSKYRKAYFSKFPGVWAHGDYCRINPKTGGIIMLGRSDGTLNPNGVRFGSSEIYNIVEAFDEVEDSLCVPQYNRDGEERVVLFLKMASGHTFQPDLVKRIRDAIRLGLSARHVPSLILETRGIPYTLNGKKVEVAVKQVMAGRTVEHRGAFSNPETLDLYRDIPELQDF.

Belongs to the ATP-dependent AMP-binding enzyme family.

It is found in the cytoplasm. The protein localises to the cytosol. It carries out the reaction acetoacetate + ATP + CoA = acetoacetyl-CoA + AMP + diphosphate. Functionally, converts acetoacetate to acetoacetyl-CoA in the cytosol. Ketone body-utilizing enzyme, responsible for the synthesis of cholesterol and fatty acids. This is Acetoacetyl-CoA synthetase (Aacs) from Mus musculus (Mouse).